Consider the following 423-residue polypeptide: Carboxypeptidase B2 (423 aa).

Residues 1 to 22 (MKLCSLAVLVPIVLFCEQHVFA) form the signal peptide. Positions 23-114 (FQSGQVLAAL…QISNDTVSPR (92 aa)) are cleaved as a propeptide — activation peptide. Asparagine 44, asparagine 73, and asparagine 85 each carry an N-linked (GlcNAc...) asparagine glycan. An N-linked (GlcNAc...) (complex) asparagine glycan is attached at asparagine 108. Residues 122–419 (QYHSLNEIYS…AAVSKIAWHV (298 aa)) enclose the Peptidase M14 domain. An intrachain disulfide couples cysteine 178 to cysteine 191. Residues histidine 181 and glutamate 184 each contribute to the Zn(2+) site. Substrate-binding positions include 181–184 (HARE) and arginine 239. Residue asparagine 241 is glycosylated (N-linked (GlcNAc...) asparagine; partial). Disulfide bonds link cysteine 250–cysteine 274 and cysteine 265–cysteine 279. 256–257 (NR) contributes to the substrate binding site. Residue histidine 310 coordinates Zn(2+). Residues 311–312 (SY) and tyrosine 363 each bind substrate. Catalysis depends on glutamate 385, which acts as the Proton donor/acceptor.

The protein belongs to the peptidase M14 family. Zn(2+) serves as cofactor. In terms of processing, N-glycosylated. N-glycan at Asn-108: Hex5HexNAc4. In terms of tissue distribution, plasma; synthesized in the liver.

It localises to the secreted. It carries out the reaction Release of C-terminal Arg and Lys from a polypeptide.. Its activity is regulated as follows. TAFI/CPB2 is unique among carboxypeptidases in that it spontaneously inactivates with a short half-life, a property that is crucial for its role in controlling blood clot lysis. The zymogen is stabilized by interactions with the activation peptide. Release of the activation peptide increases a dynamic flap mobility and in time this leads to conformational changes that disrupt the catalytic site and expose a cryptic thrombin-cleavage site present at Arg-324. Its function is as follows. Cleaves C-terminal arginine or lysine residues from biologically active peptides such as kinins or anaphylatoxins in the circulation thereby regulating their activities. Down-regulates fibrinolysis by removing C-terminal lysine residues from fibrin that has already been partially degraded by plasmin. This chain is Carboxypeptidase B2 (CPB2), found in Homo sapiens (Human).